The chain runs to 359 residues: Peptide chain release factor 1 (359 aa).

N5-methylglutamine is present on glutamine 234. Residues 283-305 form a disordered region; the sequence is SQKDAARAADRRAQVGSGDRSER.

The protein belongs to the prokaryotic/mitochondrial release factor family. Methylated by PrmC. Methylation increases the termination efficiency of RF1.

The protein resides in the cytoplasm. In terms of biological role, peptide chain release factor 1 directs the termination of translation in response to the peptide chain termination codons UAG and UAA. The polypeptide is Peptide chain release factor 1 (Methylobacterium sp. (strain 4-46)).